Reading from the N-terminus, the 1165-residue chain is ATP-dependent helicase/deoxyribonuclease subunit B (1165 aa).

A UvrD-like helicase ATP-binding domain is found at 1–298 (MALRFILGRA…AHLEREFFRR (298 aa)). 8–15 (GRAGTGKT) is a binding site for ATP. The 306-residue stretch at 279–584 (PARFRANPAL…QLALIPPALD (306 aa)) folds into the UvrD-like helicase C-terminal domain. C800, C1119, C1122, and C1128 together coordinate [4Fe-4S] cluster.

Belongs to the helicase family. AddB/RexB type 1 subfamily. Heterodimer of AddA and AddB. Mg(2+) serves as cofactor. The cofactor is [4Fe-4S] cluster.

In terms of biological role, the heterodimer acts as both an ATP-dependent DNA helicase and an ATP-dependent, dual-direction single-stranded exonuclease. Recognizes the chi site generating a DNA molecule suitable for the initiation of homologous recombination. The AddB subunit has 5' -&gt; 3' nuclease activity but not helicase activity. This is ATP-dependent helicase/deoxyribonuclease subunit B from Desulforudis audaxviator (strain MP104C).